Consider the following 349-residue polypeptide: Anthranilate phosphoribosyltransferase (349 aa).

5-phospho-alpha-D-ribose 1-diphosphate is bound by residues Gly-82, Gly-85–Asp-86, Asn-92–Thr-95, Lys-110–Ser-118, and Ser-122. Gly-82 serves as a coordination point for anthranilate. Ser-94 provides a ligand contact to Mg(2+). Residue Asn-113 coordinates anthranilate. Arg-168 is an anthranilate binding site. Residues Asp-227 and Glu-228 each contribute to the Mg(2+) site.

Belongs to the anthranilate phosphoribosyltransferase family. In terms of assembly, homodimer. Mg(2+) serves as cofactor.

The catalysed reaction is N-(5-phospho-beta-D-ribosyl)anthranilate + diphosphate = 5-phospho-alpha-D-ribose 1-diphosphate + anthranilate. It functions in the pathway amino-acid biosynthesis; L-tryptophan biosynthesis; L-tryptophan from chorismate: step 2/5. Functionally, catalyzes the transfer of the phosphoribosyl group of 5-phosphorylribose-1-pyrophosphate (PRPP) to anthranilate to yield N-(5'-phosphoribosyl)-anthranilate (PRA). The chain is Anthranilate phosphoribosyltransferase from Acinetobacter baumannii (strain ATCC 17978 / DSM 105126 / CIP 53.77 / LMG 1025 / NCDC KC755 / 5377).